Reading from the N-terminus, the 466-residue chain is Asparagine--tRNA ligase (466 aa).

This sequence belongs to the class-II aminoacyl-tRNA synthetase family. As to quaternary structure, homodimer.

The protein localises to the cytoplasm. The catalysed reaction is tRNA(Asn) + L-asparagine + ATP = L-asparaginyl-tRNA(Asn) + AMP + diphosphate + H(+). This is Asparagine--tRNA ligase from Shewanella baltica (strain OS185).